Here is a 314-residue protein sequence, read N- to C-terminus: DNA-directed RNA polymerase subunit alpha (314 aa).

The alpha N-terminal domain (alpha-NTD) stretch occupies residues Met1–Thr228. The alpha C-terminal domain (alpha-CTD) stretch occupies residues Glu246–Asp314.

Belongs to the RNA polymerase alpha chain family. In terms of assembly, homodimer. The RNAP catalytic core consists of 2 alpha, 1 beta, 1 beta' and 1 omega subunit. When a sigma factor is associated with the core the holoenzyme is formed, which can initiate transcription.

It catalyses the reaction RNA(n) + a ribonucleoside 5'-triphosphate = RNA(n+1) + diphosphate. Its function is as follows. DNA-dependent RNA polymerase catalyzes the transcription of DNA into RNA using the four ribonucleoside triphosphates as substrates. In Staphylococcus aureus (strain Mu3 / ATCC 700698), this protein is DNA-directed RNA polymerase subunit alpha.